We begin with the raw amino-acid sequence, 263 residues long: 4-hydroxy-2-oxo-heptane-1,7-dioate aldolase (263 aa).

The active-site Proton acceptor is histidine 45. Glutamine 147 is a binding site for substrate. An a divalent metal cation-binding site is contributed by glutamate 149. Substrate contacts are provided by alanine 174 and aspartate 175. An a divalent metal cation-binding site is contributed by aspartate 175.

Belongs to the HpcH/HpaI aldolase family. As to quaternary structure, homohexamer; trimer of dimers. Requires a divalent metal cation as cofactor.

It carries out the reaction 4-hydroxy-2-oxoheptanedioate = succinate semialdehyde + pyruvate. Its pathway is aromatic compound metabolism; 4-hydroxyphenylacetate degradation; pyruvate and succinate semialdehyde from 4-hydroxyphenylacetate: step 7/7. Its function is as follows. Catalyzes the reversible retro-aldol cleavage of 4-hydroxy-2-ketoheptane-1,7-dioate (HKHD) to pyruvate and succinic semialdehyde. The polypeptide is 4-hydroxy-2-oxo-heptane-1,7-dioate aldolase (Salmonella typhimurium (strain LT2 / SGSC1412 / ATCC 700720)).